The chain runs to 282 residues: Succinate dehydrogenase [ubiquinone] iron-sulfur subunit, mitochondrial (282 aa).

The transit peptide at 1 to 26 (MAAVVFSLRRSGPVLRLSGALQVSRG) directs the protein to the mitochondrion. A 2Fe-2S ferredoxin-type domain is found at 42–135 (KKFAIYRWDP…VSKIYPLPHM (94 aa)). Residues Cys-95, Cys-100, Cys-103, and Cys-115 each coordinate [2Fe-2S] cluster. One can recognise a 4Fe-4S ferredoxin-type domain in the interval 178–208 (DRDKLDGLYECILCACCSTSCPSYWWNADKY). 3 residues coordinate [4Fe-4S] cluster: Cys-188, Cys-191, and Cys-194. Cys-198 is a binding site for [3Fe-4S] cluster. Residue Trp-203 coordinates a ubiquinone. [3Fe-4S] cluster-binding residues include Cys-245 and Cys-251. A [4Fe-4S] cluster-binding site is contributed by Cys-255.

The protein belongs to the succinate dehydrogenase/fumarate reductase iron-sulfur protein family. In terms of assembly, component of complex II composed of four subunits: the flavoprotein (FP) sdha, iron-sulfur protein (IP) sdhb, and a cytochrome b composed of sdhc and sdhd. Requires [2Fe-2S] cluster as cofactor. The cofactor is [3Fe-4S] cluster. [4Fe-4S] cluster is required as a cofactor.

The protein localises to the mitochondrion inner membrane. The catalysed reaction is a quinone + succinate = fumarate + a quinol. It catalyses the reaction (R)-malate + a quinone = enol-oxaloacetate + a quinol. It carries out the reaction (S)-malate + a quinone = enol-oxaloacetate + a quinol. The protein operates within carbohydrate metabolism; tricarboxylic acid cycle; fumarate from succinate (eukaryal route): step 1/1. With respect to regulation, enol-oxaloacetate inhibits the succinate dehydrogenase activity. Its function is as follows. Iron-sulfur protein (IP) subunit of the succinate dehydrogenase complex (mitochondrial respiratory chain complex II), responsible for transferring electrons from succinate to ubiquinone (coenzyme Q). SDH also oxidizes malate to the non-canonical enol form of oxaloacetate, enol-oxaloacetate. Enol-oxaloacetate, which is a potent inhibitor of the succinate dehydrogenase activity, is further isomerized into keto-oxaloacetate. The sequence is that of Succinate dehydrogenase [ubiquinone] iron-sulfur subunit, mitochondrial (sdhb) from Xenopus laevis (African clawed frog).